The chain runs to 307 residues: Ras-related protein Rab-33 (307 aa).

The interval 19–80 (VIDPPKHVTA…IPPAPEAVTA (62 aa)) is disordered. Composition is skewed to pro residues over residues 42 to 56 (PTHP…PAVP) and 65 to 75 (PTAPPPIPPAP). A GTP-binding site is contributed by 107 to 114 (GNAAVGKT). An Effector region motif is present at residues 129–137 (TEATIGVDF). GTP-binding positions include 155 to 159 (DTAGQ) and 217 to 220 (NKCD). 2 S-geranylgeranyl cysteine lipidation sites follow: Cys306 and Cys307.

It belongs to the small GTPase superfamily. Rab family.

The protein resides in the cell membrane. The chain is Ras-related protein Rab-33 (rab-33) from Caenorhabditis elegans.